The primary structure comprises 261 residues: Vacuolar iron transporter (261 aa).

A helical transmembrane segment spans residues 66-86; the sequence is GQVLIAALAALFAGALSMAVG. Fe cation contacts are provided by E105, E108, E116, E119, and E154. The next 3 membrane-spanning stretches (helical) occupy residues 170–190, 197–217, and 233–253; these read MVSF…GAWI, IGAI…VGAF, and GGAL…TLNI.

This sequence belongs to the CCC1 family.

The protein localises to the vacuole membrane. It carries out the reaction Fe(2+)(in) = Fe(2+)(out). Functionally, vacuolar iron transporter involved in the transfer of iron ions from the cytosol to the vacuole for intracellular iron storage. In Acanthamoeba castellanii (strain ATCC 30010 / Neff), this protein is Vacuolar iron transporter.